A 289-amino-acid polypeptide reads, in one-letter code: Glycerol facilitator-aquaporin gla (289 aa).

Helical transmembrane passes span 10-30 (ITEFVGTALLIIMGNGAVANV) and 41-61 (SWMIIGWGYGLGVMLPAVAFG). Residues 68–70 (NPA) carry the NPA 1 motif. The next 3 helical transmembrane spans lie at 87 to 107 (AQYIIAQVLGAMFGQLLIVMV), 151 to 171 (FVGSFVLFFGAVAATNIFFGS), and 209 to 229 (MVAHLFLGFLVMGLVVALGGP). An NPA 2 motif is present at residues 235–237 (NPA). Residues 264 to 284 (WYAWVPVLAPILASLAAVALF) traverse the membrane as a helical segment.

Belongs to the MIP/aquaporin (TC 1.A.8) family.

It is found in the cell membrane. Mixed channel protein that transports both water and glycerol. This is Glycerol facilitator-aquaporin gla (gla) from Lactococcus lactis subsp. lactis (strain IL1403) (Streptococcus lactis).